A 428-amino-acid polypeptide reads, in one-letter code: Nuclear hormone receptor family member nhr-44 (428 aa).

Residues 21 to 98 (SEKCLVCFQP…LGMKPDNIQR (78 aa)) constitute a DNA-binding region (nuclear receptor). NR C4-type zinc fingers lie at residues 24–44 (CLVCFQPSHGNHFGVDSCRAC) and 61–86 (CREGDNKCTPDEWGRWSCKRCRSDKC). In terms of domain architecture, NR LBD spans 181–427 (SLEQLAFGLQ…LSHPEMFQFS (247 aa)).

It belongs to the nuclear hormone receptor family.

It localises to the nucleus. Functionally, orphan nuclear receptor. This chain is Nuclear hormone receptor family member nhr-44 (nhr-44), found in Caenorhabditis elegans.